The sequence spans 434 residues: Adenylosuccinate synthetase (434 aa).

GTP contacts are provided by residues 15-21 (GDEGKGK) and 43-45 (GHT). The Proton acceptor role is filled by D16. Residues D16 and G43 each contribute to the Mg(2+) site. IMP-binding positions include 16–19 (DEGK), 41–44 (NAGH), T133, R147, Q228, T243, and R307. The active-site Proton donor is the H44. Residue 303–309 (SVTGRAR) participates in substrate binding. GTP is bound by residues R309, 335-337 (KLD), and 418-420 (STG).

The protein belongs to the adenylosuccinate synthetase family. As to quaternary structure, homodimer. Mg(2+) serves as cofactor.

It localises to the cytoplasm. It carries out the reaction IMP + L-aspartate + GTP = N(6)-(1,2-dicarboxyethyl)-AMP + GDP + phosphate + 2 H(+). It functions in the pathway purine metabolism; AMP biosynthesis via de novo pathway; AMP from IMP: step 1/2. Its function is as follows. Plays an important role in the de novo pathway of purine nucleotide biosynthesis. Catalyzes the first committed step in the biosynthesis of AMP from IMP. This is Adenylosuccinate synthetase from Neisseria gonorrhoeae (strain NCCP11945).